A 700-amino-acid polypeptide reads, in one-letter code: MRQNNLFSLIFWLVPVSLIIVVSAQLCSEKFGTFTPGGTFDKNRRIILSSLPSEVTAQDGFYNASIGTDPDQLYAMGMCIPGAKQKLCRDCIMDVTRQLIQTCPNQTAAIHWSGGGKTVCMARYYNQPSSRPLDLESVSIGYNVGNLSTNLTDFDRLWERLIAHMVTKASSASIKYLSFDNSRFYAADETNLTNSQMVYALMQCTPDVSPSNCNTCLKQSVDDYVGCCHGKQGGYVYRPSCIFRWDLYPFNGAFDLLTLAPPPSSQLQSPPPVTNKDEKTIHTGTIIGIVIVVAMVIIMALLALGVSVCRSRKKYQAFASETADDITTVGYLQFDIKDIEAATSNFLASNKIGQGGFGEVYKGTLSNGTEVAVKRLSRTSDQGELEFKNEVLLVAKLQHRNLVRLLGFALQGEEKILVFEFVPNKSLDYFLFGSTNPTKKGQLDWTRRYNIIGGITRGLLYLHQDSRLTIIHRDIKASNILLDADMNPKIADFGMARNFRDHQTEDSTGRVVGTFGYMPPEYVAHGQFSTKSDVYSFGVLILEIVSGRKNSSFYQMDGSVCNLVTYVWRLWNTDSSLELVDPAISGSYEKDEVTRCIHIGLLCVQENPVNRPALSTIFQMLTNSSITLNVPQPPGFFFRNRPESDTLRRGLEPDQYNNESVTCSIDNATITTLLGKTLASALCCITSTLFSKSMYRNTED.

The signal sequence occupies residues 1-24 (MRQNNLFSLIFWLVPVSLIIVVSA). 2 Gnk2-homologous domains span residues 25 to 129 (QLCS…NQPS) and 135 to 250 (LESV…LYPF). Topologically, residues 25–285 (QLCSEKFGTF…KDEKTIHTGT (261 aa)) are extracellular. Residues Asn63, Asn105, Asn146, Asn150, and Asn191 are each glycosylated (N-linked (GlcNAc...) asparagine). A helical transmembrane segment spans residues 286 to 306 (IIGIVIVVAMVIIMALLALGV). Residues 307-700 (SVCRSRKKYQ…SKSMYRNTED (394 aa)) are Cytoplasmic-facing. The Protein kinase domain maps to 346 to 626 (FLASNKIGQG…IFQMLTNSSI (281 aa)). ATP is bound by residues 352–360 (IGQGGFGEV) and Lys374. Asp474 functions as the Proton acceptor in the catalytic mechanism. Ser478 bears the Phosphoserine mark. Thr514 is subject to Phosphothreonine. Position 522 is a phosphotyrosine (Tyr522).

It belongs to the protein kinase superfamily. Ser/Thr protein kinase family. CRK subfamily.

The protein localises to the membrane. It carries out the reaction L-seryl-[protein] + ATP = O-phospho-L-seryl-[protein] + ADP + H(+). It catalyses the reaction L-threonyl-[protein] + ATP = O-phospho-L-threonyl-[protein] + ADP + H(+). This chain is Putative cysteine-rich receptor-like protein kinase 30 (CRK30), found in Arabidopsis thaliana (Mouse-ear cress).